The following is a 927-amino-acid chain: MAWLRLQPLTSAFLHFGLVTFVLFLNGLRAEAGGSGDVPSTGQNNESCSGSSDCKEGVILPIWYPENPSLGDKIARVIVYFVALIYMFLGVSIIADRFMASIEVITSQEREVTIKKPNGETSTTTIRVWNETVSNLTLMALGSSAPEILLSLIEVCGHGFIAGDLGPSTIVGSAAFNMFIIIGICVYVIPDGETRKIKHLRVFFITAAWSIFAYIWLYMILAVFSPGVVQVWEGLLTLFFFPVCVLLAWVADKRLLFYKYMHKKYRTDKHRGIIIETEGDHPKGIEMDGKMMNSHFLDGNLVPLEGKEVDESRREMIRILKDLKQKHPEKDLDQLVEMANYYALSHQQKSRAFYRIQATRMMTGAGNILKKHAAEQAKKASSMSEVHTDEPEDFISKVFFDPCSYQCLENCGAVLLTVVRKGGDMSKTMYVDYKTEDGSANAGADYEFTEGTVVLKPGETQKEFSVGIIDDDIFEEDEHFFVRLSNVRIEEEQPEEGMPPAIFNSLPLPRAVLASPCVATVTILDDDHAGIFTFECDTIHVSESIGVMEVKVLRTSGARGTVIVPFRTVEGTAKGGGEDFEDTYGELEFKNDETVKTIRVKIVDEEEYERQENFFIALGEPKWMERGISALLLSPDVTDRKLTMEEEEAKRIAEMGKPVLGEHPKLEVIIEESYEFKTTVDKLIKKTNLALVVGTHSWRDQFMEAITVSAAGDEDEDESGEERLPSCFDYVMHFLTVFWKVLFACVPPTEYCHGWACFAVSILIIGMLTAIIGDLASHFGCTIGLKDSVTAVVFVAFGTSVPDTFASKAAALQDVYADASIGNVTGSNAVNVFLGIGLAWSVAAIYWALQGQEFHVSAGTLAFSVTLFTIFAFVCISVLLYRRRPHLGGELGGPRGCKLATTWLFVSLWLLYILFATLEAYCYIKGF.

Positions 1–30 (MAWLRLQPLTSAFLHFGLVTFVLFLNGLRA) are cleaved as a signal peptide. At 31–73 (EAGGSGDVPSTGQNNESCSGSSDCKEGVILPIWYPENPSLGDK) the chain is on the extracellular side. Residue Asn-45 is glycosylated (N-linked (GlcNAc...) asparagine). The chain crosses the membrane as a helical span at residues 74 to 94 (IARVIVYFVALIYMFLGVSII). The Cytoplasmic segment spans residues 95 to 147 (ADRFMASIEVITSQEREVTIKKPNGETSTTTIRVWNETVSNLTLMALGSSAPE). The Alpha-1 repeat unit spans residues 140–180 (ALGSSAPEILLSLIEVCGHGFIAGDLGPSTIVGSAAFNMFI). A helical transmembrane segment spans residues 148–168 (ILLSLIEVCGHGFIAGDLGPS). Thr-169 is a topological domain (extracellular). The helical transmembrane segment at 170–190 (IVGSAAFNMFIIIGICVYVIP) threads the bilayer. Over 191-202 (DGETRKIKHLRV) the chain is Cytoplasmic. Residues 203-223 (FFITAAWSIFAYIWLYMILAV) form a helical membrane-spanning segment. The Extracellular segment spans residues 224-230 (FSPGVVQ). Residues 231-251 (VWEGLLTLFFFPVCVLLAWVA) traverse the membrane as a helical segment. Residues 252–726 (DKRLLFYKYM…DESGEERLPS (475 aa)) lie on the Cytoplasmic side of the membrane. The segment at 253-272 (KRLLFYKYMHKKYRTDKHRG) is putative calmodulin-binding region. Calx-beta domains are found at residues 386–485 (VHTD…VRLS) and 519–619 (ATVT…IALG). Residues Glu-409, Asp-445, Asp-470, Asp-471, Ile-473, Glu-475, Glu-478, Asp-525, Asp-526, Asp-527, Glu-543, Asp-579, Glu-606, Glu-607, and Glu-672 each coordinate Ca(2+). The chain crosses the membrane as a helical span at residues 727–747 (CFDYVMHFLTVFWKVLFACVP). At 748-754 (PTEYCHG) the chain is on the extracellular side. Residues 755-775 (WACFAVSILIIGMLTAIIGDL) traverse the membrane as a helical segment. Over 776 to 778 (ASH) the chain is Cytoplasmic. Residues 779–799 (FGCTIGLKDSVTAVVFVAFGT) form a helical membrane-spanning segment. The stretch at 796 to 832 (AFGTSVPDTFASKAAALQDVYADASIGNVTGSNAVNV) is one Alpha-2 repeat. Topologically, residues 800–828 (SVPDTFASKAAALQDVYADASIGNVTGSN) are extracellular. An N-linked (GlcNAc...) asparagine glycan is attached at Asn-823. The chain crosses the membrane as a helical span at residues 829–849 (AVNVFLGIGLAWSVAAIYWAL). The Cytoplasmic portion of the chain corresponds to 850–860 (QGQEFHVSAGT). Residues 861–881 (LAFSVTLFTIFAFVCISVLLY) form a helical membrane-spanning segment. Over 882-903 (RRRPHLGGELGGPRGCKLATTW) the chain is Extracellular. A helical transmembrane segment spans residues 904–924 (LFVSLWLLYILFATLEAYCYI). At 925-927 (KGF) the chain is on the cytoplasmic side.

It belongs to the Ca(2+):cation antiporter (CaCA) (TC 2.A.19) family. SLC8 subfamily. As to quaternary structure, interacts with AKAP1. In terms of tissue distribution, isoform 2 is expressed in brain and skeletal muscle. Isoform 3 is expressed in excitable cells of brain, retina and skeletal muscle. Isoform 4 is expressed in skeletal muscle.

The protein resides in the cell membrane. The protein localises to the perikaryon. It is found in the cell projection. It localises to the dendrite. Its subcellular location is the dendritic spine. The protein resides in the sarcolemma. The protein localises to the cytoplasm. It is found in the sarcoplasm. It localises to the cell junction. Its subcellular location is the mitochondrion outer membrane. The protein resides in the perinuclear region. The protein localises to the endoplasmic reticulum membrane. It catalyses the reaction Ca(2+)(in) + 3 Na(+)(out) = Ca(2+)(out) + 3 Na(+)(in). With respect to regulation, calcium transport is down-regulated by Na(+) and stimulated by Ca(2+). Mediates the electrogenic exchange of Ca(2+) against Na(+) ions across the cell membrane, and thereby contributes to the regulation of cytoplasmic Ca(2+) levels and Ca(2+)-dependent cellular processes. Contributes to cellular Ca(2+) homeostasis in excitable cells, both in muscle and in brain. In a first phase, voltage-gated channels mediate the rapid increase of cytoplasmic Ca(2+) levels due to release of Ca(2+) stores from the endoplasmic reticulum. SLC8A3 mediates the export of Ca(2+) from the cell during the next phase, so that cytoplasmic Ca(2+) levels rapidly return to baseline. Contributes to Ca(2+) transport during excitation-contraction coupling in muscle. In neurons, contributes to the rapid decrease of cytoplasmic Ca(2+) levels back to baseline after neuronal activation, and thereby contributes to modulate synaptic plasticity, learning and memory. Required for normal oligodendrocyte differentiation and for normal myelination. Mediates Ca(2+) efflux from mitochondria and contributes to mitochondrial Ca(2+) ion homeostasis. The polypeptide is Sodium/calcium exchanger 3 (SLC8A3) (Homo sapiens (Human)).